The primary structure comprises 79 residues: Defensin-1 (79 aa).

Residues 1 to 23 (MKFLNVVAIALLVVACLAVYSNA) form the signal peptide. 3 disulfide bridges follow: cysteine 42–cysteine 69, cysteine 55–cysteine 75, and cysteine 59–cysteine 77.

Belongs to the invertebrate defensin family. Type 1 subfamily.

The protein resides in the secreted. The chain is Defensin-1 (SMD1) from Stomoxys calcitrans (Stable fly).